Reading from the N-terminus, the 497-residue chain is Glycerol kinase (497 aa).

Thr-13 serves as a coordination point for ADP. Residues Thr-13, Thr-14, and Ser-15 each contribute to the ATP site. Residue Thr-13 coordinates sn-glycerol 3-phosphate. Position 17 (Arg-17) interacts with ADP. Residues Arg-83, Glu-84, and Tyr-135 each coordinate sn-glycerol 3-phosphate. Glycerol contacts are provided by Arg-83, Glu-84, and Tyr-135. His-231 is modified (phosphohistidine; by HPr). Asp-245 provides a ligand contact to sn-glycerol 3-phosphate. Positions 245 and 246 each coordinate glycerol. Residues Thr-267 and Gly-310 each contribute to the ADP site. ATP is bound by residues Thr-267, Gly-310, Gln-314, and Gly-411. ADP contacts are provided by Gly-411 and Asn-415.

This sequence belongs to the FGGY kinase family. In terms of assembly, homotetramer and homodimer (in equilibrium). The phosphoenolpyruvate-dependent sugar phosphotransferase system (PTS), including enzyme I, and histidine-containing protein (HPr) are required for the phosphorylation, which leads to the activation of the enzyme.

It carries out the reaction glycerol + ATP = sn-glycerol 3-phosphate + ADP + H(+). Its pathway is polyol metabolism; glycerol degradation via glycerol kinase pathway; sn-glycerol 3-phosphate from glycerol: step 1/1. Activated by phosphorylation and inhibited by fructose 1,6-bisphosphate (FBP). In terms of biological role, key enzyme in the regulation of glycerol uptake and metabolism. Catalyzes the phosphorylation of glycerol to yield sn-glycerol 3-phosphate. The chain is Glycerol kinase from Listeria welshimeri serovar 6b (strain ATCC 35897 / DSM 20650 / CCUG 15529 / CIP 8149 / NCTC 11857 / SLCC 5334 / V8).